Consider the following 223-residue polypeptide: Putative NAD(P)H nitroreductase SAB2397c (223 aa).

It belongs to the nitroreductase family. Requires FMN as cofactor.

This Staphylococcus aureus (strain bovine RF122 / ET3-1) protein is Putative NAD(P)H nitroreductase SAB2397c.